The following is a 157-amino-acid chain: Probable succinate transporter subunit YjjB (157 aa).

A run of 4 helical transmembrane segments spans residues leucine 8–phenylalanine 28, methionine 50–glycine 70, valine 87–isoleucine 107, and phenylalanine 129–tryptophan 149.

Belongs to the ThrE exporter (TC 2.A.79) family. As to quaternary structure, the transporter is composed of YjjB and YjjP.

It is found in the cell inner membrane. Functionally, involved in succinate export with YjjP. Both proteins are required for export. In Escherichia coli O157:H7 (strain EC4115 / EHEC), this protein is Probable succinate transporter subunit YjjB.